Consider the following 267-residue polypeptide: Methylglyoxal reductase DkgB (267 aa).

Residue Y39 is the Proton donor of the active site. Substrate is bound at residue H97. 179–231 contacts NADP(+); it reads MTLAYGKALAEPVIKTIAEQHGATPAQVILSWAMQLGYGVIPSSTKAANLASN.

The protein belongs to the aldo/keto reductase family. In terms of assembly, monomer.

The protein resides in the cytoplasm. The catalysed reaction is hydroxyacetone + NADP(+) = methylglyoxal + NADPH + H(+). Aldo-keto reductase that significantly contributes to cellular methylglyoxal detoxification by catalyzing the NADPH-dependent conversion of methylglyoxal to acetol. The protein is Methylglyoxal reductase DkgB of Yersinia pestis.